A 467-amino-acid polypeptide reads, in one-letter code: uncharacterized protein (467 aa).

Lys-290 carries the N6-(pyridoxal phosphate)lysine modification.

It belongs to the class-III pyridoxal-phosphate-dependent aminotransferase family. The cofactor is pyridoxal 5'-phosphate.

This is an uncharacterized protein from Sinorhizobium fredii (strain NBRC 101917 / NGR234).